Here is a 914-residue protein sequence, read N- to C-terminus: Protein translocase subunit SecA (914 aa).

Residues Gln-87, 105–109 (GEGKT), and Asp-508 each bind ATP. Positions 898, 900, 909, and 910 each coordinate Zn(2+).

It belongs to the SecA family. In terms of assembly, monomer and homodimer. Part of the essential Sec protein translocation apparatus which comprises SecA, SecYEG and auxiliary proteins SecDF-YajC and YidC. It depends on Zn(2+) as a cofactor.

Its subcellular location is the cell inner membrane. It localises to the cytoplasm. The catalysed reaction is ATP + H2O + cellular proteinSide 1 = ADP + phosphate + cellular proteinSide 2.. Its function is as follows. Part of the Sec protein translocase complex. Interacts with the SecYEG preprotein conducting channel. Has a central role in coupling the hydrolysis of ATP to the transfer of proteins into and across the cell membrane, serving both as a receptor for the preprotein-SecB complex and as an ATP-driven molecular motor driving the stepwise translocation of polypeptide chains across the membrane. This Xylella fastidiosa (strain 9a5c) protein is Protein translocase subunit SecA.